Reading from the N-terminus, the 568-residue chain is Proline--tRNA ligase (568 aa).

It belongs to the class-II aminoacyl-tRNA synthetase family. ProS type 1 subfamily. Homodimer.

The protein localises to the cytoplasm. It catalyses the reaction tRNA(Pro) + L-proline + ATP = L-prolyl-tRNA(Pro) + AMP + diphosphate. Catalyzes the attachment of proline to tRNA(Pro) in a two-step reaction: proline is first activated by ATP to form Pro-AMP and then transferred to the acceptor end of tRNA(Pro). As ProRS can inadvertently accommodate and process non-cognate amino acids such as alanine and cysteine, to avoid such errors it has two additional distinct editing activities against alanine. One activity is designated as 'pretransfer' editing and involves the tRNA(Pro)-independent hydrolysis of activated Ala-AMP. The other activity is designated 'posttransfer' editing and involves deacylation of mischarged Ala-tRNA(Pro). The misacylated Cys-tRNA(Pro) is not edited by ProRS. This chain is Proline--tRNA ligase, found in Chlamydia pneumoniae (Chlamydophila pneumoniae).